Here is a 381-residue protein sequence, read N- to C-terminus: Heterogeneous nuclear rnp K-like protein 2 (381 aa).

Positions 1 to 34 (MSQFFEAATPVAIPTNNTNGGSSDAGSAATGGAP) are disordered. Residues 15–33 (TNNTNGGSSDAGSAATGGA) are compositionally biased toward low complexity. KH domains lie at 43–107 (TINH…IGDI), 156–221 (IGYV…LIEI), and 258–326 (NTRI…ESML). The disordered stretch occupies residues 357–381 (RSDSASFLEEKEEPQKNHDNKEEQS). Residues Ser-358, Ser-360, and Ser-362 each carry the phosphoserine modification. Basic and acidic residues predominate over residues 369–381 (EPQKNHDNKEEQS).

This sequence belongs to the HEK2 family. In terms of assembly, binds RNA. In terms of processing, phosphorylated by the plasma membrane-Anchored casein kinase YCK1. Phosphorylation at its C-terminus reduces its RNA-binding capacity.

It localises to the cytoplasm. It is found in the P-body. The protein localises to the nucleus. Its subcellular location is the chromosome. The protein resides in the telomere. Its function is as follows. RNA-binding protein involved in the correct localization of transcripts in the cell. RNA localization is a widespread mechanism for achieving localized protein synthesis. Required for the asymmetric localization to the daughter cell nucleus of the ASH1 transcript, coding for a specific repressor of transcription. Overexpression inhibits translation of the ASH1 transcript. Involved in the stability of transcripts, like the MTL1 mRNA. Involved in structural and functional organization of telomeric chromatin and regulates silencing at the HMR locus. The chain is Heterogeneous nuclear rnp K-like protein 2 (HEK2) from Saccharomyces cerevisiae (strain RM11-1a) (Baker's yeast).